The sequence spans 522 residues: Thiamine biosynthetic bifunctional enzyme TH1, chloroplastic (522 aa).

The transit peptide at 1–36 (MNSLGGIRSWPANWRSTTASMTTTESVRKVPQVLTV) directs the protein to the chloroplast. Residues 345–349 (QLREK) and N377 each bind 4-amino-2-methyl-5-(diphosphooxymethyl)pyrimidine. 2 residues coordinate Mg(2+): D378 and D397. S416 contributes to the 4-amino-2-methyl-5-(diphosphooxymethyl)pyrimidine binding site. 442 to 444 (TNT) is a binding site for 2-[(2R,5Z)-2-carboxy-4-methylthiazol-5(2H)-ylidene]ethyl phosphate. K445 provides a ligand contact to 4-amino-2-methyl-5-(diphosphooxymethyl)pyrimidine. 2-[(2R,5Z)-2-carboxy-4-methylthiazol-5(2H)-ylidene]ethyl phosphate contacts are provided by residues G472 and 495-496 (VS).

Belongs to the thiamine-phosphate synthase family. Mg(2+) serves as cofactor.

The protein localises to the plastid. It localises to the chloroplast. The enzyme catalyses 2-[(2R,5Z)-2-carboxy-4-methylthiazol-5(2H)-ylidene]ethyl phosphate + 4-amino-2-methyl-5-(diphosphooxymethyl)pyrimidine + 2 H(+) = thiamine phosphate + CO2 + diphosphate. It catalyses the reaction 2-(2-carboxy-4-methylthiazol-5-yl)ethyl phosphate + 4-amino-2-methyl-5-(diphosphooxymethyl)pyrimidine + 2 H(+) = thiamine phosphate + CO2 + diphosphate. The catalysed reaction is 4-methyl-5-(2-phosphooxyethyl)-thiazole + 4-amino-2-methyl-5-(diphosphooxymethyl)pyrimidine + H(+) = thiamine phosphate + diphosphate. It carries out the reaction 4-amino-5-hydroxymethyl-2-methylpyrimidine + ATP = 4-amino-2-methyl-5-(phosphooxymethyl)pyrimidine + ADP + H(+). Its pathway is cofactor biosynthesis; thiamine diphosphate biosynthesis; thiamine phosphate from 4-amino-2-methyl-5-diphosphomethylpyrimidine and 4-methyl-5-(2-phosphoethyl)-thiazole: step 1/1. It functions in the pathway cofactor biosynthesis; thiamine diphosphate biosynthesis; 4-amino-2-methyl-5-diphosphomethylpyrimidine from 5-amino-1-(5-phospho-D-ribosyl)imidazole: step 2/3. Essential for thiamine biosynthesis. Bifunctional enzyme that catalyzes the phosphorylation of hydroxymethylpyrimidine phosphate (HMP-P) to HMP-PP and condenses 4-methyl-5-(beta-hydroxyethyl)thiazole monophosphate (THZ-P) and 2-methyl-4-amino-5-hydroxymethyl pyrimidine pyrophosphate (HMP-PP) to form thiamine monophosphate (TMP). The protein is Thiamine biosynthetic bifunctional enzyme TH1, chloroplastic (TH1) of Arabidopsis thaliana (Mouse-ear cress).